The following is a 232-amino-acid chain: Sugar fermentation stimulation protein homolog (232 aa).

This sequence belongs to the SfsA family.

The polypeptide is Sugar fermentation stimulation protein homolog (Geobacter sulfurreducens (strain ATCC 51573 / DSM 12127 / PCA)).